Reading from the N-terminus, the 356-residue chain is Peptide chain release factor 1 (356 aa).

Position 233 is an N5-methylglutamine (glutamine 233).

Belongs to the prokaryotic/mitochondrial release factor family. Post-translationally, methylated by PrmC. Methylation increases the termination efficiency of RF1.

The protein localises to the cytoplasm. Functionally, peptide chain release factor 1 directs the termination of translation in response to the peptide chain termination codons UAG and UAA. This is Peptide chain release factor 1 from Symbiobacterium thermophilum (strain DSM 24528 / JCM 14929 / IAM 14863 / T).